The primary structure comprises 346 residues: NADH-ubiquinone oxidoreductase chain 2 (346 aa).

Helical transmembrane passes span 1–21, 25–45, 60–80, 96–116, 124–144, 149–169, 178–198, 200–220, 242–262, 274–294, and 325–345; these read MNPHAKLISLISLLLGTTITI, HWIMAWTGLEINTLAIIPLIS, FLVQAAASALVLFSSMSNAWA, MLLTAAIAIKLGLVPFHFWFP, LTTALLLSTLMKLPPMAILLM, LNPTVLTSMALASAALGGWMG, ILAFSSIAHLGWMTMIIIYNP, LTLLTFYLYILMTATVFLSLN, AALMLTLLSLAGLPPLTGFMP, EMTTVATIIALLSLLGLFFYL, and IAILSSLSAILLPISPMILAA.

Belongs to the complex I subunit 2 family.

Its subcellular location is the mitochondrion inner membrane. The enzyme catalyses a ubiquinone + NADH + 5 H(+)(in) = a ubiquinol + NAD(+) + 4 H(+)(out). Its function is as follows. Core subunit of the mitochondrial membrane respiratory chain NADH dehydrogenase (Complex I) that is believed to belong to the minimal assembly required for catalysis. Complex I functions in the transfer of electrons from NADH to the respiratory chain. The immediate electron acceptor for the enzyme is believed to be ubiquinone. The polypeptide is NADH-ubiquinone oxidoreductase chain 2 (MT-ND2) (Struthio camelus (Common ostrich)).